The following is a 96-amino-acid chain: Large ribosomal subunit protein bL27 (96 aa).

Positions 1 to 9 are excised as a propeptide; that stretch reads MLRLDLQFF. Residues 13–35 are disordered; it reads KGVGSTKNGRDSQSKRLGAKRAD.

The protein belongs to the bacterial ribosomal protein bL27 family. In terms of processing, the N-terminus is cleaved by ribosomal processing cysteine protease Prp.

The polypeptide is Large ribosomal subunit protein bL27 (Bacillus cereus (strain B4264)).